A 114-amino-acid chain; its full sequence is Ribonuclease P protein component (114 aa).

The protein belongs to the RnpA family. In terms of assembly, consists of a catalytic RNA component (M1 or rnpB) and a protein subunit.

It carries out the reaction Endonucleolytic cleavage of RNA, removing 5'-extranucleotides from tRNA precursor.. Functionally, RNaseP catalyzes the removal of the 5'-leader sequence from pre-tRNA to produce the mature 5'-terminus. It can also cleave other RNA substrates such as 4.5S RNA. The protein component plays an auxiliary but essential role in vivo by binding to the 5'-leader sequence and broadening the substrate specificity of the ribozyme. The chain is Ribonuclease P protein component from Buchnera aphidicola subsp. Schizaphis graminum (strain Sg).